The chain runs to 312 residues: Malate dehydrogenase (312 aa).

NAD(+) contacts are provided by residues 12–17 (GAGFTG) and Asp36. Positions 87 and 93 each coordinate substrate. Residues Asn100 and 123–125 (LTN) contribute to the NAD(+) site. Position 125 (Asn125) interacts with substrate. Ser149 carries the phosphoserine modification. Arg156 lines the substrate pocket. His180 acts as the Proton acceptor in catalysis.

The protein belongs to the LDH/MDH superfamily. MDH type 3 family.

The catalysed reaction is (S)-malate + NAD(+) = oxaloacetate + NADH + H(+). Catalyzes the reversible oxidation of malate to oxaloacetate. In Geobacillus kaustophilus (strain HTA426), this protein is Malate dehydrogenase.